The following is a 283-amino-acid chain: Peroxisome biogenesis protein 22 (283 aa).

An N-acetylalanine modification is found at Ala2. The chain crosses the membrane as a helical span at residues 45-62 (IGAIAGLAIAVIFTWRAI). Residues 66–107 (GEQRQRRQPKRRIHNAETSSAAAAASQSNLASSVAPEVSSPR) form a disordered region. Positions 81 to 100 (AETSSAAAAASQSNLASSVA) are enriched in low complexity.

Belongs to the peroxin-22 family. In terms of assembly, interacts with PEX4.

It localises to the peroxisome membrane. In terms of biological role, may be tethered PEX4 to the peroxisome membrane and may be involved in a late step of the matrix protein import. Does not play a role in the biogenesis of the peroxisomal membrane. The chain is Peroxisome biogenesis protein 22 (PEX22) from Arabidopsis thaliana (Mouse-ear cress).